Reading from the N-terminus, the 447-residue chain is Phosphoglucosamine mutase (447 aa).

The Phosphoserine intermediate role is filled by serine 108. 4 residues coordinate Mg(2+): serine 108, aspartate 247, aspartate 249, and aspartate 251. Serine 108 carries the phosphoserine modification.

It belongs to the phosphohexose mutase family. Mg(2+) serves as cofactor. Post-translationally, activated by phosphorylation.

It carries out the reaction alpha-D-glucosamine 1-phosphate = D-glucosamine 6-phosphate. Catalyzes the conversion of glucosamine-6-phosphate to glucosamine-1-phosphate. This chain is Phosphoglucosamine mutase, found in Bordetella petrii (strain ATCC BAA-461 / DSM 12804 / CCUG 43448).